The sequence spans 176 residues: Protein SPMIP1 (176 aa).

The segment at 55–80 (TLHPKAPLSPPPAPKSAPSKVPSPVP) is disordered. Residues 61-80 (PLSPPPAPKSAPSKVPSPVP) show a composition bias toward pro residues.

In Homo sapiens (Human), this protein is Protein SPMIP1.